We begin with the raw amino-acid sequence, 269 residues long: C-type lectin domain family 1 member A (269 aa).

Over 1-51 (MQAKYSSTRDMLDDDDTTISLYSGTSTVTRRAEPRHSENGTPSSVWRPVAL) the chain is Cytoplasmic. The chain crosses the membrane as a helical; Signal-anchor for type II membrane protein span at residues 52–72 (TLLTLCLVLLVGLAALGLVFF). The Extracellular segment spans residues 73 to 269 (QFYQLSNIQQ…AGRVVPGELQ (197 aa)). N94, N126, N168, and N202 each carry an N-linked (GlcNAc...) asparagine glycan. One can recognise a C-type lectin domain in the interval 143–257 (YGDKCYQFYK…CKELRRCACE (115 aa)). 2 disulfide bridges follow: C164-C256 and C235-C248.

The protein localises to the membrane. The polypeptide is C-type lectin domain family 1 member A (Clec1a) (Mus musculus (Mouse)).